Reading from the N-terminus, the 252-residue chain is Trans-aconitate 2-methyltransferase (252 aa).

Belongs to the methyltransferase superfamily. Tam family. In terms of assembly, monomer.

Its subcellular location is the cytoplasm. It catalyses the reaction trans-aconitate + S-adenosyl-L-methionine = (E)-3-(methoxycarbonyl)pent-2-enedioate + S-adenosyl-L-homocysteine. Functionally, catalyzes the S-adenosylmethionine monomethyl esterification of trans-aconitate at high affinity and of cis-aconitate, isocitrate, and citrate at lower velocities and affinities. This chain is Trans-aconitate 2-methyltransferase (tam), found in Escherichia coli O157:H7.